A 487-amino-acid polypeptide reads, in one-letter code: MGRSRGNFQNFEDPTQRTRKKKNAANVENFESTSLVPGAEGGGKYNCDYCQKDITGKIRIKCAVCPDFDLCIECMSVGAEITPHKCDHPYRVMGNLTFPLICPDWSADDEMLLLEGLEIYGLGNWAEVAEHVGTKSKEQCLEHYRNIYLNSPFFPLPDMSHVAGKNRKELQAMAKGRIDDKKAEQNMKEEYPFSPPKVKVEDTQKESFVDRSFGGKKPVSTSVNNSLVELSNYNQKREEFDPEYDNDAEQLLAEMEFKENDTPEEHELKLRVLRIYSKRLDERKRRKEFIIERNLLYPNPFEKDLSQEEKVQCRRLDVFMRFHSKEEHDELLRNVVSEYRMVKRLKDLKEAQVAGCRSTAEAERYLGRKRKRENEEGMNRGKESGQFGQIAGEMGSRPPVQASSSYVNDLDLIGFTESQLLSESEKRLCSEVKLVPPVYLQMQQVMSHEIFKGNVTKKSDAYSLFKIDPTKVDRVYDMLVKKGIAQL.

The span at 1 to 13 (MGRSRGNFQNFED) shows a compositional bias: polar residues. Positions 1-25 (MGRSRGNFQNFEDPTQRTRKKKNAA) are disordered. Residues 42-98 (GGKYNCDYCQKDITGKIRIKCAVCPDFDLCIECMSVGAEITPHKCDHPYRVMGNLTF) form a ZZ-type zinc finger. Zn(2+) is bound by residues Cys47, Cys50, Cys62, Cys65, Cys71, Cys74, His84, and His88. Residues 100–152 (LICPDWSADDEMLLLEGLEIYGLGNWAEVAEHVGTKSKEQCLEHYRNIYLNSP) enclose the SANT domain. Lys216 is modified (N6-acetyllysine; by GCN5). Over residues 368-383 (RKRKRENEEGMNRGKE) the composition is skewed to basic and acidic residues. The disordered stretch occupies residues 368 to 388 (RKRKRENEEGMNRGKESGQFG). Residues 401–487 (QASSSYVNDL…MLVKKGIAQL (87 aa)) enclose the SWIRM domain.

As to quaternary structure, interacts in vitro with the HAT domain of GCN5 and with the DNA-binding domain of the transcriptional activator DREB1B/CBF1. Interacts with BZIP11. Post-translationally, acetylated in vitro by GCN5, but acetylation is not essential for biological activity. In terms of tissue distribution, expressed in roots, leaves, stems, flowers and siliques, with the strongest activity in the meristematic zones.

The protein resides in the nucleus. Its function is as follows. Required for the function of some acidic activation domains, which activate transcription from a distant site. The exact mechanism of action is not yet known. ADA2 stimulates the acetyltransferase activity of GCN5 on free histones or nucleosomes, probably by opening up the promoter region. Mediates auxin and cytokinin signals in the control of cell proliferation and might be involved in repression of a freezing tolerance pathway at warm temperature. Involved in the positive regulation of salt-induced gene expression by maintaining locus-specific acetylation of histones H4 and H3. The polypeptide is Transcriptional adapter ADA2b (ADA2B) (Arabidopsis thaliana (Mouse-ear cress)).